Reading from the N-terminus, the 559-residue chain is Nuclear speckle splicing regulatory protein 1 (559 aa).

A disordered region spans residues 22-57 (VLQKPSVFGNDSDDDDDETSVSESLQREAAKKQAMK). Phosphoserine is present on residues Ser-27 and Ser-33. Residues 32-41 (DSDDDDDETS) are compositionally biased toward acidic residues. A coiled-coil region spans residues 105-179 (IHNLLKAVEI…EARLDVTKQR (75 aa)). The interval 107–171 (NLLKAVEIRK…RERRAAALEA (65 aa)) is necessary for alternative splicing activity. Positions 195-534 (EEEVPTCSFR…AKRSNEETVT (340 aa)) are disordered. Residues 204-219 (REARSEIKEEKSKGYS) show a composition bias toward basic and acidic residues. Lys-211 is covalently cross-linked (Glycyl lysine isopeptide (Lys-Gly) (interchain with G-Cter in SUMO2)). Phosphoserine occurs at positions 249, 255, and 256. The segment covering 251-274 (FDAKSSENDEMEGDKGNCRREKGT) has biased composition (basic and acidic residues). Thr-276 carries the post-translational modification Phosphothreonine. Lys-282 is covalently cross-linked (Glycyl lysine isopeptide (Lys-Gly) (interchain with G-Cter in SUMO2)). Basic and acidic residues-rich tracts occupy residues 314–343 (EKRE…EKRD), 351–488 (SHRD…RNPE), and 502–521 (RITE…HETV). Residues 379–428 (KREKDREKYPSREQERHRQRNNYDRHNEKGCEKEEKSKEKEEHVKARKER) are a coiled coil. At Ser-458 the chain carries Phosphoserine.

The protein belongs to the NSRP1 family. In terms of assembly, interacts (via C-terminus) with SRSF1. Interacts (via C-terminus) with SRSF2.

The protein resides in the nucleus. It localises to the nucleus speckle. Functionally, RNA-binding protein that mediates pre-mRNA alternative splicing regulation. This is Nuclear speckle splicing regulatory protein 1 (NSRP1) from Bos taurus (Bovine).